A 206-amino-acid chain; its full sequence is Imidazoleglycerol-phosphate dehydratase (206 aa).

Residues 1–24 (MDPTASGRQAPRNPRQATVQRETK) are disordered.

It belongs to the imidazoleglycerol-phosphate dehydratase family.

The protein localises to the cytoplasm. It catalyses the reaction D-erythro-1-(imidazol-4-yl)glycerol 3-phosphate = 3-(imidazol-4-yl)-2-oxopropyl phosphate + H2O. It participates in amino-acid biosynthesis; L-histidine biosynthesis; L-histidine from 5-phospho-alpha-D-ribose 1-diphosphate: step 6/9. The protein is Imidazoleglycerol-phosphate dehydratase of Acidothermus cellulolyticus (strain ATCC 43068 / DSM 8971 / 11B).